The sequence spans 403 residues: Aspartic endopeptidase PEP1 (403 aa).

The N-terminal stretch at 1–20 (MVQISQIGAVLAVCSTLTVA) is a signal peptide. Residues 21-67 (APTKGKARFNVPQVAVPMKAVHHPAVAYARALHKFGMKVPKAVSDAA) constitute a propeptide, activation peptide. The Peptidase A1 domain maps to 82 to 400 (YVTQVTVGQG…DTEGPRIGFA (319 aa)). Asp-98 is an active-site residue. Asn-159 and Asn-270 each carry an N-linked (GlcNAc...) asparagine glycan. The active site involves Asp-293. Cys-329 and Cys-361 are disulfide-bonded.

Belongs to the peptidase A1 family.

It localises to the secreted. The catalysed reaction is Hydrolysis of proteins with broad specificity. Generally favors hydrophobic residues in P1 and P1', but also accepts Lys in P1, which leads to activation of trypsinogen. Does not clot milk.. In terms of biological role, secreted aspartic endopeptidase that allows assimilation of proteinaceous substrates. Can catalyze hydrolysis of the major structural proteins of basement membrane, elastin, collagen, and laminin. Thought to play a significant role in virulence. Its function is as follows. Can catalyze hydrolysis of the major structural proteins of basement membrane, elastin, collagen, and laminin. Thought to play a significant role in virulence. The sequence is that of Aspartic endopeptidase PEP1 (PEP1) from Trichophyton verrucosum (strain HKI 0517).